The following is a 289-amino-acid chain: Glycerol facilitator-aquaporin gla (289 aa).

The next 2 membrane-spanning stretches (helical) occupy residues 10–30 (ITEF…VANV) and 41–61 (SWMI…VAFG). Positions 68 to 70 (NPA) match the NPA 1 motif. The next 3 helical transmembrane spans lie at 87 to 107 (AQYI…IVMV), 151 to 171 (FVGS…FFGS), and 209 to 229 (MVAH…LGGP). An NPA 2 motif is present at residues 235 to 237 (NPA). The chain crosses the membrane as a helical span at residues 264-284 (WYAWVPVLAPILASLAAVALF).

Belongs to the MIP/aquaporin (TC 1.A.8) family.

It is found in the cell membrane. Its function is as follows. Mixed channel protein that transports both water and glycerol. This Lactococcus lactis subsp. lactis (strain IL1403) (Streptococcus lactis) protein is Glycerol facilitator-aquaporin gla (gla).